A 420-amino-acid chain; its full sequence is Mannose-1-phosphate guanylyltransferase regulatory subunit alpha (420 aa).

A substrate-binding domain region spans residues 2–251; that stretch reads LKAVILIGGP…DGIWSQIKSA (250 aa). GDP-alpha-D-mannose-binding residues include Glu-85 and Gln-247. A hexapeptide repeat domain region spans residues 273 to 420; that stretch reads LARHTAGGPR…SRSFTNQIIL (148 aa). A C-loop region spans residues 356 to 384; the sequence is TPNDPNPNDPRARMDSESLFKDGKLLPAI.

Belongs to the transferase hexapeptide repeat family. As to quaternary structure, component of the GMPPA-GMPPB mannose-1-phosphate guanylyltransferase complex composed of 4 GMPPA subunits and 8 GMPPB subunits; the complex is organized into three layers, a central layer made up of 2 GMPPA dimers sandwiched between two layers each made up of 2 GMPPB dimers.

The protein localises to the cytoplasm. Regulatory subunit of the GMPPA-GMPPB mannose-1-phosphate guanylyltransferase complex; reduces the catalytic activity of GMPPB when part of the complex. Mediates allosteric feedback inhibition of GMPPB catalytic activity upon binding GDP-alpha-D-mannose. Together with GMPPB regulates GDP-alpha-D-mannose levels. In Rattus norvegicus (Rat), this protein is Mannose-1-phosphate guanylyltransferase regulatory subunit alpha (Gmppa).